The chain runs to 454 residues: tRNA modification GTPase MnmE (454 aa).

Residues arginine 23, glutamate 80, and lysine 120 each coordinate (6S)-5-formyl-5,6,7,8-tetrahydrofolate. Residues glycine 216–glycine 377 form the TrmE-type G domain. Position 226 (asparagine 226) interacts with K(+). GTP-binding positions include asparagine 226–serine 231, threonine 245–threonine 251, aspartate 270–glycine 273, asparagine 335–aspartate 338, and serine 358–arginine 360. Serine 230 serves as a coordination point for Mg(2+). Positions 245, 247, and 250 each coordinate K(+). Threonine 251 lines the Mg(2+) pocket. Lysine 454 provides a ligand contact to (6S)-5-formyl-5,6,7,8-tetrahydrofolate.

It belongs to the TRAFAC class TrmE-Era-EngA-EngB-Septin-like GTPase superfamily. TrmE GTPase family. Homodimer. Heterotetramer of two MnmE and two MnmG subunits. K(+) is required as a cofactor.

Its subcellular location is the cytoplasm. Functionally, exhibits a very high intrinsic GTPase hydrolysis rate. Involved in the addition of a carboxymethylaminomethyl (cmnm) group at the wobble position (U34) of certain tRNAs, forming tRNA-cmnm(5)s(2)U34. This Yersinia pestis bv. Antiqua (strain Antiqua) protein is tRNA modification GTPase MnmE.